The following is a 255-amino-acid chain: Small ribosomal subunit protein eS4 (255 aa).

The S4 RNA-binding domain maps to 43-115; that stretch reads IPLLILVRDV…PTRFFTLHPI (73 aa).

It belongs to the eukaryotic ribosomal protein eS4 family.

This chain is Small ribosomal subunit protein eS4, found in Hyperthermus butylicus (strain DSM 5456 / JCM 9403 / PLM1-5).